The chain runs to 80 residues: MPRKFDVLEHELVPKHVLLSKEEANRLLKAMGLKKSELPWIYSTDPVARALKAKPGDVIMIIRQSPTAGESVAFRLVMRG.

It belongs to the archaeal Rpo5/eukaryotic RPB5 RNA polymerase subunit family. Part of the RNA polymerase complex.

It localises to the cytoplasm. It catalyses the reaction RNA(n) + a ribonucleoside 5'-triphosphate = RNA(n+1) + diphosphate. Its function is as follows. DNA-dependent RNA polymerase (RNAP) catalyzes the transcription of DNA into RNA using the four ribonucleoside triphosphates as substrates. The protein is DNA-directed RNA polymerase subunit Rpo5 of Thermofilum pendens (strain DSM 2475 / Hrk 5).